Consider the following 123-residue polypeptide: uncharacterized protein (123 aa).

A helical membrane pass occupies residues 5–25; that stretch reads GTLVIIFAIVLILCIMLLFFY. The disordered stretch occupies residues 32–53; the sequence is KSGVLPPPIPPPTPPPPKKKYD. Residues 36–47 are compositionally biased toward pro residues; that stretch reads LPPPIPPPTPPP.

This sequence belongs to the asfivirus CP123L family.

Its subcellular location is the host membrane. The protein resides in the virion. This is an uncharacterized protein from Ornithodoros (relapsing fever ticks).